The primary structure comprises 45 residues: Protein PsbN (45 aa).

A helical transmembrane segment spans residues 12-30 (FLSRSLVSFTGYALYTAFG).

The protein belongs to the PsbN family.

The protein localises to the plastid. The protein resides in the chloroplast thylakoid membrane. Its function is as follows. May play a role in photosystem I and II biogenesis. The chain is Protein PsbN from Adiantum capillus-veneris (Maidenhair fern).